The following is a 132-amino-acid chain: Large ribosomal subunit protein eL8 (132 aa).

Residue Lys8 is modified to N6-acetyllysine; alternate. Lys8 participates in a covalent cross-link: Glycyl lysine isopeptide (Lys-Gly) (interchain with G-Cter in SUMO2); alternate. Lys36 participates in a covalent cross-link: Glycyl lysine isopeptide (Lys-Gly) (interchain with G-Cter in SUMO2). N6-acetyllysine is present on Lys128.

It belongs to the eukaryotic ribosomal protein eL8 family. In terms of assembly, component of the large ribosomal subunit. Interacts with CRY1. Interacts with DICER1, AGO2, TARBP2, MOV10 and EIF6; they form a large RNA-induced silencing complex (RISC).

It localises to the cytoplasm. Component of the large ribosomal subunit. The ribosome is a large ribonucleoprotein complex responsible for the synthesis of proteins in the cell. In Sus scrofa (Pig), this protein is Large ribosomal subunit protein eL8 (RPL7A).